The following is a 308-amino-acid chain: MIISISLMDNIKSKVKHIYEIFFNKRLVETKKISLIEVYGESQNKSIKNPVQNSDSDNSIMLTPLSSKIYHASSPRSKPHVLRGLFEDDEYILSSETDEDNIDPDYQEKMENNGLGFFMEDFICAYGVCPVCGEKSLRKFSHSNVPVIDLVCINKKHHLKKKKCFVFQIKISLNTNYFSLKNQIISVGSKKYGNICHLRKGSDPLLHKIIVPGYICIKLSRSSSTSQEYIIDHKNSFVLIPNYSDESSDLYYQYLDYTSMYGKDLVTWNINMVETKNLDYVLSNNKIIHEIFLEKTIDNPYKDLVKLI.

This is an uncharacterized protein from Acanthamoeba polyphaga (Amoeba).